A 403-amino-acid polypeptide reads, in one-letter code: Putative F-box/LRR-repeat protein At5g38386 (403 aa).

Positions methionine 1 to phenylalanine 47 constitute an F-box domain. 6 LRR repeats span residues isoleucine 64–cysteine 91, glycine 93–methionine 119, valine 131–histidine 156, leucine 175–aspartate 203, tyrosine 243–serine 274, and valine 275–alanine 300.

The chain is Putative F-box/LRR-repeat protein At5g38386 from Arabidopsis thaliana (Mouse-ear cress).